The following is a 369-amino-acid chain: Guanine nucleotide-binding protein subunit beta-2 (369 aa).

Over residues 1-24 the composition is skewed to polar residues; that stretch reads MSTIAGESSSSSKMPENSQPTTTE. Residues 1-28 are disordered; the sequence is MSTIAGESSSSSKMPENSQPTTTEKGSE. 7 WD repeats span residues 79 to 109, 121 to 151, 167 to 197, 209 to 241, 253 to 283, 297 to 327, and 339 to 369; these read GHVGKVLCMDWSLDKRHIVSSSQDGKVIVWD, MPTTWVMACAFSPSSQMIACGGLDNKCSVVP, THTSYMSCCTFLRSDNLILTGSGDSTCAIWD, GHTGDVFAIDVPKCDTGNTFISAGADKHSLVWD, GHEADINTVRFHPNGDAFATGSDDATCRLFD, SILFPVNGVDFSLSGRILFAGYGDYRVGVWD, and GHENRISCLRTSPDGTAVCSASWDCTIRIWA.

The protein belongs to the WD repeat G protein beta family. G proteins are composed of 3 units, alpha, beta and gamma. Interacts with G protein gamma subunits gpc-1 and gpc-2 and with egl-10 and eat-16.

Guanine nucleotide-binding proteins (G proteins) are involved as a modulator or transducer in various transmembrane signaling systems. The beta and gamma chains are required for the GTPase activity, for replacement of GDP by GTP, and for G protein-effector interaction. Plays a role in regulating dopamine-mediated locomotion behavior. The sequence is that of Guanine nucleotide-binding protein subunit beta-2 from Caenorhabditis elegans.